Consider the following 212-residue polypeptide: Fe/S biogenesis protein NfuA (212 aa).

[4Fe-4S] cluster is bound by residues Cys-169 and Cys-172.

Belongs to the NfuA family. Homodimer. It depends on [4Fe-4S] cluster as a cofactor.

In terms of biological role, involved in iron-sulfur cluster biogenesis. Binds a 4Fe-4S cluster, can transfer this cluster to apoproteins, and thereby intervenes in the maturation of Fe/S proteins. Could also act as a scaffold/chaperone for damaged Fe/S proteins. The protein is Fe/S biogenesis protein NfuA of Acinetobacter baumannii (strain AB307-0294).